The chain runs to 583 residues: Pentatricopeptide repeat-containing protein At2g33760 (583 aa).

PPR repeat units follow at residues 71-105 (DDFLFNSVIKSTSKLRLPLHCVAYYRRMLSSNVSP), 106-140 (SNYTFTSVIKSCADLSALRIGKGVHCHAVVSGFGL), 141-171 (DTYVQAALVTFYSKCGDMEGARQVFDRMPEK), 172-206 (SIVAWNSLVSGFEQNGLADEAIQVFYQMRESGFEP), 207-241 (DSATFVSLLSACAQTGAVSLGSWVHQYIISEGLDL), 242-276 (NVKLGTALINLYSRCGDVGKAREVFDKMKETNVAA), 277-303 (WTAMISAYGTHGYGQQAVELFNKMEDD), 309-339 (NNVTFVAVLSACAHAGLVEEGRSVYKRMTKS), and 345-379 (GVEHHVCMVDMLGRAGFLDEAYKFIHQLDATGKAT). The segment at 383–458 (LWTAMLGACK…QVGYSVIEVE (76 aa)) is type E motif. The type E(+) motif stretch occupies residues 459 to 489 (NKTYMFSMGDESHQETGEIYRYLETLISRCK). Residues 490 to 583 (EIGYAPVSEE…NGSCSCLDYW (94 aa)) are type DYW motif.

It belongs to the PPR family. PCMP-H subfamily.

The chain is Pentatricopeptide repeat-containing protein At2g33760 (PCMP-H6) from Arabidopsis thaliana (Mouse-ear cress).